Here is a 376-residue protein sequence, read N- to C-terminus: Probable sister chromatid cohesion protein DCC1 (376 aa).

Residues Gln213–Asp232 are disordered. Residues Ser219 to Asp232 are compositionally biased toward gly residues.

The protein belongs to the DCC1 family.

It localises to the nucleus. Functionally, loads PCNA onto primed templates regulating velocity, spacing and restart activity of replication forks. May couple DNA replication to sister chromatid cohesion. The chain is Probable sister chromatid cohesion protein DCC1 from Dictyostelium discoideum (Social amoeba).